Reading from the N-terminus, the 711-residue chain is Polyribonucleotide nucleotidyltransferase (711 aa).

Residues D486 and D492 each coordinate Mg(2+). The region spanning 553-612 (PRIHTIKINPDKIKDVIGKGGSVIRALTEETGTTIEIEDDGTVKIAATDGDKAQHAIRRI) is the KH domain. Residues 622 to 690 (GRIYNGKVTR…RQGRVRLSIK (69 aa)) form the S1 motif domain. The disordered stretch occupies residues 691-711 (EATEQTPSAAAPEAPVAEQGE). Over residues 699–711 (AAAPEAPVAEQGE) the composition is skewed to low complexity.

It belongs to the polyribonucleotide nucleotidyltransferase family. In terms of assembly, component of the RNA degradosome, which is a multiprotein complex involved in RNA processing and mRNA degradation. It depends on Mg(2+) as a cofactor.

It localises to the cytoplasm. The catalysed reaction is RNA(n+1) + phosphate = RNA(n) + a ribonucleoside 5'-diphosphate. Involved in mRNA degradation. Catalyzes the phosphorolysis of single-stranded polyribonucleotides processively in the 3'- to 5'-direction. The polypeptide is Polyribonucleotide nucleotidyltransferase (Klebsiella pneumoniae (strain 342)).